The following is a 274-amino-acid chain: Phosphate import ATP-binding protein PstB (274 aa).

The ABC transporter domain occupies Val-28–Ile-269. ATP is bound at residue Gly-60 to Ser-67.

This sequence belongs to the ABC transporter superfamily. Phosphate importer (TC 3.A.1.7) family. In terms of assembly, the complex is composed of two ATP-binding proteins (PstB), two transmembrane proteins (PstC and PstA) and a solute-binding protein (PstS).

The protein localises to the cell inner membrane. The enzyme catalyses phosphate(out) + ATP + H2O = ADP + 2 phosphate(in) + H(+). Part of the ABC transporter complex PstSACB involved in phosphate import. Responsible for energy coupling to the transport system. The polypeptide is Phosphate import ATP-binding protein PstB (Rhodopseudomonas palustris (strain HaA2)).